Here is a 240-residue protein sequence, read N- to C-terminus: Extracellular superoxide dismutase [Cu-Zn] (240 aa).

The first 18 residues, 1-18, serve as a signal peptide directing secretion; the sequence is MLALLCSCLLLAAGASDA. Intrachain disulfides connect C63/C208 and C125/C207. Residue N107 is glycosylated (N-linked (GlcNAc...) asparagine). 3 residues coordinate Cu cation: H114, H116, and H131. Zn(2+) is bound by residues H131, H139, H142, and D145. H181 serves as a coordination point for Cu cation. N-linked (Glc) (glycation) lysine; in vitro glycosylation is found at K229 and K230.

This sequence belongs to the Cu-Zn superoxide dismutase family. As to quaternary structure, homotetramer. Directly interacts with ATP7A; this interaction is copper-dependent and is required for SOD3 activity. It depends on Cu cation as a cofactor. Zn(2+) serves as cofactor. Expressed in blood vessels, heart, lung, kidney and placenta. Major SOD isoenzyme in extracellular fluids such as plasma, lymph and synovial fluid.

It is found in the secreted. The protein resides in the extracellular space. The protein localises to the golgi apparatus. It localises to the trans-Golgi network. The catalysed reaction is 2 superoxide + 2 H(+) = H2O2 + O2. In terms of biological role, protect the extracellular space from toxic effect of reactive oxygen intermediates by converting superoxide radicals into hydrogen peroxide and oxygen. The sequence is that of Extracellular superoxide dismutase [Cu-Zn] (SOD3) from Homo sapiens (Human).